The following is a 558-amino-acid chain: Pentatricopeptide repeat-containing protein At1g06140, mitochondrial (558 aa).

The transit peptide at 1–79 (MLPVNRARAL…RNRHSWNTIL (79 aa)) directs the protein to the mitochondrion. 13 PPR repeats span residues 38 to 68 (EVVL…IPCW), 71 to 103 (NRHS…MRRH), 108 to 142 (DSFN…GLDK), 143 to 173 (DDYV…IPVR), 174 to 208 (NSVL…GLAL), 209 to 243 (DALT…SFID), 245 to 275 (SDYL…SVDR), 276 to 310 (NVVM…SILP), 311 to 345 (NQCT…GIEM), 346 to 376 (DAVN…MPER), 377 to 411 (NVIS…NVVP), 412 to 447 (NSVT…GVVP), and 448 to 482 (EEEH…PMAS). Residues 483 to 558 (AWGALLSACR…HVGQSATEVG (76 aa)) form a type E motif region.

It belongs to the PPR family. PCMP-E subfamily.

It localises to the mitochondrion. The polypeptide is Pentatricopeptide repeat-containing protein At1g06140, mitochondrial (PCMP-E61) (Arabidopsis thaliana (Mouse-ear cress)).